A 550-amino-acid polypeptide reads, in one-letter code: Zorya protein ZorA (550 aa).

The next 3 membrane-spanning stretches (helical) occupy residues 16-36 (TLIT…AWWC), 52-72 (LMGA…LLNF), and 92-112 (FITS…DAFF).

Belongs to the MotA family.

The protein localises to the cell inner membrane. Its function is as follows. Component of antiviral defense system Zorya type II, composed of ZorA, ZorB and ZorE. Expression of Zorya type II in E.coli (strain MG1655) confers resistance to phages SECphi7 and T7. While most T7 infected Zorya-containing cells undergo abortive infection, a minority produce viable phage progeny. These eventually accumulate to a high multiplicity of infection, leading to culture collapse by 170 minutes after initial infection. ZorA and ZorB probably assemble in the cell inner membrane and exert their effect there. In Escherichia coli (strain ATCC 8739 / DSM 1576 / NBRC 3972 / NCIMB 8545 / WDCM 00012 / Crooks), this protein is Zorya protein ZorA.